A 255-amino-acid polypeptide reads, in one-letter code: Endonuclease 8 2 (255 aa).

Catalysis depends on proline 2, which acts as the Schiff-base intermediate with DNA. Glutamate 3 acts as the Proton donor in catalysis. Lysine 51 serves as the catalytic Proton donor; for beta-elimination activity. DNA contacts are provided by glutamine 67 and asparagine 164. An FPG-type zinc finger spans residues 221 to 255 (WVYGRAGQGCRRCGTLIAYDTTDERVRYWCPACQR). The Proton donor; for delta-elimination activity role is filled by arginine 245.

This sequence belongs to the FPG family. Zn(2+) serves as cofactor.

It catalyses the reaction 2'-deoxyribonucleotide-(2'-deoxyribose 5'-phosphate)-2'-deoxyribonucleotide-DNA = a 3'-end 2'-deoxyribonucleotide-(2,3-dehydro-2,3-deoxyribose 5'-phosphate)-DNA + a 5'-end 5'-phospho-2'-deoxyribonucleoside-DNA + H(+). Its function is as follows. Involved in base excision repair of DNA damaged by oxidation or by mutagenic agents. Acts as a DNA glycosylase that recognizes and removes damaged bases. Has AP (apurinic/apyrimidinic) lyase activity and introduces nicks in the DNA strand. Cleaves the DNA backbone by beta-delta elimination to generate a single-strand break at the site of the removed base with both 3'- and 5'-phosphates. The polypeptide is Endonuclease 8 2 (nei2) (Mycobacterium bovis (strain ATCC BAA-935 / AF2122/97)).